The sequence spans 279 residues: Thymidylate synthase (279 aa).

133-134 (RR) is a binding site for dUMP. Cysteine 154 serves as the catalytic Nucleophile. Residues 178–181 (RSND), asparagine 189, and 219–221 (HIY) contribute to the dUMP site. Residue aspartate 181 participates in (6R)-5,10-methylene-5,6,7,8-tetrahydrofolate binding. Alanine 278 lines the (6R)-5,10-methylene-5,6,7,8-tetrahydrofolate pocket.

Belongs to the thymidylate synthase family. Bacterial-type ThyA subfamily. In terms of assembly, homodimer.

The protein resides in the cytoplasm. It carries out the reaction dUMP + (6R)-5,10-methylene-5,6,7,8-tetrahydrofolate = 7,8-dihydrofolate + dTMP. Its pathway is pyrimidine metabolism; dTTP biosynthesis. Functionally, catalyzes the reductive methylation of 2'-deoxyuridine-5'-monophosphate (dUMP) to 2'-deoxythymidine-5'-monophosphate (dTMP) while utilizing 5,10-methylenetetrahydrofolate (mTHF) as the methyl donor and reductant in the reaction, yielding dihydrofolate (DHF) as a by-product. This enzymatic reaction provides an intracellular de novo source of dTMP, an essential precursor for DNA biosynthesis. The chain is Thymidylate synthase from Streptococcus pyogenes serotype M12 (strain MGAS2096).